Consider the following 273-residue polypeptide: Galactose-binding lectin (273 aa).

Positions 1-23 (MKPFCVFLTFFLLLAASSKKVDS) are cleaved as a signal peptide. Mn(2+)-binding residues include Glu-144 and Asp-146. Asp-146, Tyr-148, Asn-150, and Asp-155 together coordinate Ca(2+). 2 residues coordinate Mn(2+): Asp-155 and His-160.

Belongs to the leguminous lectin family. Homotetramer.

Functionally, D-galactose specific lectin. The chain is Galactose-binding lectin from Arachis hypogaea (Peanut).